Here is a 419-residue protein sequence, read N- to C-terminus: ATP-dependent RNA helicase RhlB (419 aa).

Positions 9-37 match the Q motif motif; it reads QRFSDLALHRIVQQAIKEKGFEFCTPIQA. The Helicase ATP-binding domain maps to 40-217; it reads LPITLKGQDI…FEHMNDPQYV (178 aa). An ATP-binding site is contributed by 53-60; it reads AQTGTGKT. Positions 163 to 166 match the DEAD box motif; sequence DEAD. The Helicase C-terminal domain maps to 241 to 388; sequence KMALLMTLLE…VSQYDAKALI (148 aa).

It belongs to the DEAD box helicase family. RhlB subfamily. In terms of assembly, component of the RNA degradosome, which is a multiprotein complex involved in RNA processing and mRNA degradation.

It localises to the cytoplasm. It catalyses the reaction ATP + H2O = ADP + phosphate + H(+). In terms of biological role, DEAD-box RNA helicase involved in RNA degradation. Has RNA-dependent ATPase activity and unwinds double-stranded RNA. This is ATP-dependent RNA helicase RhlB from Histophilus somni (strain 2336) (Haemophilus somnus).